The chain runs to 207 residues: Small ribosomal subunit protein uS4 (207 aa).

The S4 RNA-binding domain maps to S96–Y156.

It belongs to the universal ribosomal protein uS4 family. Part of the 30S ribosomal subunit. Contacts protein S5. The interaction surface between S4 and S5 is involved in control of translational fidelity.

In terms of biological role, one of the primary rRNA binding proteins, it binds directly to 16S rRNA where it nucleates assembly of the body of the 30S subunit. With S5 and S12 plays an important role in translational accuracy. The protein is Small ribosomal subunit protein uS4 of Blochmanniella floridana.